Here is a 448-residue protein sequence, read N- to C-terminus: Bifunctional protein GlmU (448 aa).

The tract at residues 1-232 (MSDRSLLVVV…ADEVAGVNSR (232 aa)) is pyrophosphorylase. UDP-N-acetyl-alpha-D-glucosamine-binding positions include 11-14 (LAAG), lysine 25, glutamine 78, and 83-84 (GT). A Mg(2+)-binding site is contributed by aspartate 108. UDP-N-acetyl-alpha-D-glucosamine-binding residues include glycine 144, glutamate 158, asparagine 173, and asparagine 230. Asparagine 230 contributes to the Mg(2+) binding site. The tract at residues 233-253 (VQLAEAEAILQRRLRLAAMAG) is linker. The interval 254 to 448 (GATLVAPETV…FRAARSKPKG (195 aa)) is N-acetyltransferase. Arginine 319 and lysine 337 together coordinate UDP-N-acetyl-alpha-D-glucosamine. Histidine 349 acts as the Proton acceptor in catalysis. UDP-N-acetyl-alpha-D-glucosamine is bound by residues tyrosine 352 and asparagine 363. Acetyl-CoA contacts are provided by residues alanine 366, 372–373 (NY), threonine 409, and arginine 426.

It in the N-terminal section; belongs to the N-acetylglucosamine-1-phosphate uridyltransferase family. In the C-terminal section; belongs to the transferase hexapeptide repeat family. In terms of assembly, homotrimer. The cofactor is Mg(2+).

The protein localises to the cytoplasm. The enzyme catalyses alpha-D-glucosamine 1-phosphate + acetyl-CoA = N-acetyl-alpha-D-glucosamine 1-phosphate + CoA + H(+). It carries out the reaction N-acetyl-alpha-D-glucosamine 1-phosphate + UTP + H(+) = UDP-N-acetyl-alpha-D-glucosamine + diphosphate. Its pathway is nucleotide-sugar biosynthesis; UDP-N-acetyl-alpha-D-glucosamine biosynthesis; N-acetyl-alpha-D-glucosamine 1-phosphate from alpha-D-glucosamine 6-phosphate (route II): step 2/2. It functions in the pathway nucleotide-sugar biosynthesis; UDP-N-acetyl-alpha-D-glucosamine biosynthesis; UDP-N-acetyl-alpha-D-glucosamine from N-acetyl-alpha-D-glucosamine 1-phosphate: step 1/1. The protein operates within bacterial outer membrane biogenesis; LPS lipid A biosynthesis. Its function is as follows. Catalyzes the last two sequential reactions in the de novo biosynthetic pathway for UDP-N-acetylglucosamine (UDP-GlcNAc). The C-terminal domain catalyzes the transfer of acetyl group from acetyl coenzyme A to glucosamine-1-phosphate (GlcN-1-P) to produce N-acetylglucosamine-1-phosphate (GlcNAc-1-P), which is converted into UDP-GlcNAc by the transfer of uridine 5-monophosphate (from uridine 5-triphosphate), a reaction catalyzed by the N-terminal domain. The protein is Bifunctional protein GlmU of Xanthobacter autotrophicus (strain ATCC BAA-1158 / Py2).